A 315-amino-acid chain; its full sequence is Protoheme IX farnesyltransferase (315 aa).

The next 9 helical transmembrane spans lie at 32 to 52 (VMSL…GHMN), 53 to 73 (PVLA…SGAL), 93 to 113 (IPAG…LSAF), 120 to 140 (LMVN…YAVI), 153 to 173 (IVIG…AATG), 180 to 200 (LVLF…LSLF), 226 to 246 (ALFY…MGFA), 249 to 269 (FYGV…WRLW), and 295 to 315 (IFAV…FGVF).

This sequence belongs to the UbiA prenyltransferase family. Protoheme IX farnesyltransferase subfamily.

It localises to the cell inner membrane. The catalysed reaction is heme b + (2E,6E)-farnesyl diphosphate + H2O = Fe(II)-heme o + diphosphate. It participates in porphyrin-containing compound metabolism; heme O biosynthesis; heme O from protoheme: step 1/1. Its function is as follows. Converts heme B (protoheme IX) to heme O by substitution of the vinyl group on carbon 2 of heme B porphyrin ring with a hydroxyethyl farnesyl side group. The polypeptide is Protoheme IX farnesyltransferase (Brucella canis (strain ATCC 23365 / NCTC 10854 / RM-666)).